The primary structure comprises 404 residues: 2,3-diketo-5-methylthiopentyl-1-phosphate enolase (404 aa).

K91 (proton acceptor) is an active-site residue. Substrate is bound by residues K140, K166 to E169, H257, G329, and G351 to G352. Mg(2+) is bound by residues K166, D168, and E169. K166 is subject to N6-carboxylysine.

Belongs to the RuBisCO large chain family. Type IV subfamily. As to quaternary structure, homodimer. The cofactor is Mg(2+).

The enzyme catalyses 5-methylsulfanyl-2,3-dioxopentyl phosphate = 2-hydroxy-5-methylsulfanyl-3-oxopent-1-enyl phosphate. Its pathway is amino-acid biosynthesis; L-methionine biosynthesis via salvage pathway; L-methionine from S-methyl-5-thio-alpha-D-ribose 1-phosphate: step 3/6. In terms of biological role, catalyzes the enolization of 2,3-diketo-5-methylthiopentyl-1-phosphate (DK-MTP-1-P) into 2-hydroxy-3-keto-5-methylthiopentenyl-1-phosphate (HK-MTPenyl-1-P). This chain is 2,3-diketo-5-methylthiopentyl-1-phosphate enolase, found in Bacillus velezensis (strain DSM 23117 / BGSC 10A6 / LMG 26770 / FZB42) (Bacillus amyloliquefaciens subsp. plantarum).